Consider the following 331-residue polypeptide: Beta-ketoacyl-[acyl-carrier-protein] synthase III (331 aa).

Catalysis depends on residues cysteine 115 and histidine 255. The ACP-binding stretch occupies residues 256–260 (QANFR). The active site involves asparagine 285.

The protein belongs to the thiolase-like superfamily. FabH family. Homodimer.

It localises to the cytoplasm. The enzyme catalyses malonyl-[ACP] + acetyl-CoA + H(+) = 3-oxobutanoyl-[ACP] + CO2 + CoA. It participates in lipid metabolism; fatty acid biosynthesis. Catalyzes the condensation reaction of fatty acid synthesis by the addition to an acyl acceptor of two carbons from malonyl-ACP. Catalyzes the first condensation reaction which initiates fatty acid synthesis and may therefore play a role in governing the total rate of fatty acid production. Possesses both acetoacetyl-ACP synthase and acetyl transacylase activities. Its substrate specificity determines the biosynthesis of branched-chain and/or straight-chain of fatty acids. This Helicobacter pylori (strain J99 / ATCC 700824) (Campylobacter pylori J99) protein is Beta-ketoacyl-[acyl-carrier-protein] synthase III.